We begin with the raw amino-acid sequence, 501 residues long: Glycerol kinase (501 aa).

ADP is bound at residue Thr12. Thr12, Thr13, and Ser14 together coordinate ATP. Thr12 provides a ligand contact to sn-glycerol 3-phosphate. Arg16 contributes to the ADP binding site. Positions 82, 83, 134, and 244 each coordinate sn-glycerol 3-phosphate. Residues Arg82, Glu83, Tyr134, Asp244, and Gln245 each contribute to the glycerol site. ADP-binding residues include Thr266 and Gly310. ATP-binding residues include Thr266, Gly310, Gln314, and Gly411. 2 residues coordinate ADP: Gly411 and Asn415.

Belongs to the FGGY kinase family.

The catalysed reaction is glycerol + ATP = sn-glycerol 3-phosphate + ADP + H(+). The protein operates within polyol metabolism; glycerol degradation via glycerol kinase pathway; sn-glycerol 3-phosphate from glycerol: step 1/1. With respect to regulation, inhibited by fructose 1,6-bisphosphate (FBP). Its function is as follows. Key enzyme in the regulation of glycerol uptake and metabolism. Catalyzes the phosphorylation of glycerol to yield sn-glycerol 3-phosphate. The sequence is that of Glycerol kinase from Methylobacterium radiotolerans (strain ATCC 27329 / DSM 1819 / JCM 2831 / NBRC 15690 / NCIMB 10815 / 0-1).